The following is a 660-amino-acid chain: MSAIESVMQEHRVFNPPEGFASQAAIPSMEAYQALCDEAERDYEGFWARHARELLHWTKPFTKVLDQSNAPFYKWFEDGELNASYNCLDRNLQNGNADKVAIVFEADDGSVTRVTYRELHGKVCRFANGLKALGIRKGDRVVIYMPMSVEGVVAMQACARLGATHSVVFGGFSAKSLQERLVDVGAVALITADEQMRGGKALPLKAIADDALALGGCEAVRNVIVYRRTGGKVAWTEGRDRWMEDVSAGQPDTCEAEPVSAEHPLFVLYTSGSTGKPKGVQHSTGGYLLWALMTMKWTFDIKPDDLFWCTADIGWVTGHTYIAYGPLAAGATQVVFEGVPTYPNAGRFWDMIARHKVSIFYTAPTAIRSLIKAAEADEKIHPKQYDLSSLRLLGTVGEPINPEAWMWYYKNIGNERCPIVDTFWQTETGGHMITPLPGATPLVPGSCTLPLPGIMAAIVDETGHDVPNGNGGILVVKRPWPAMIRTIWGDPERFRKSYFPEELGGKLYLAGDGSIRDKDTGYFTIMGRIDDVLNVSGHRMGTMEIESALVSNPLVAEAAVVGRPDDMTGEAICAFVVLKRSRPTGEEAVKIATELRNWVGKEIGPIAKPKDIRFGDNLPKTRSGKIMRRLLRSLAKGEEITQDTSTLENPAILEQLKQAQ.

CoA contacts are provided by residues 197 to 200 (RGGK) and threonine 317. Residues 397-399 (GEP), 421-426 (DTFWQT), aspartate 512, and arginine 528 contribute to the ATP site. Residue serine 536 participates in CoA binding. Arginine 539 provides a ligand contact to ATP. Mg(2+) contacts are provided by valine 550 and valine 555. Lysine 625 carries the N6-acetyllysine modification.

Belongs to the ATP-dependent AMP-binding enzyme family. The cofactor is Mg(2+). Acetylated. Deacetylation by the SIR2-homolog deacetylase activates the enzyme.

It carries out the reaction acetate + ATP + CoA = acetyl-CoA + AMP + diphosphate. The protein operates within ketone degradation; acetoin degradation. Functionally, catalyzes the conversion of acetate into acetyl-CoA (AcCoA), an essential intermediate at the junction of anabolic and catabolic pathways. AcsA undergoes a two-step reaction. In the first half reaction, AcsA combines acetate with ATP to form acetyl-adenylate (AcAMP) intermediate. In the second half reaction, it can then transfer the acetyl group from AcAMP to the sulfhydryl group of CoA, forming the product AcCoA. Although acetate is the preferred substrate of AcsA, propionate is also used, but at a diminished rate compared with that of acetate. Fatty acids with more than three carbon atoms are usually not accepted as substrates by AcsA. This chain is Acetyl-coenzyme A synthetase, found in Cupriavidus necator (strain ATCC 17699 / DSM 428 / KCTC 22496 / NCIMB 10442 / H16 / Stanier 337) (Ralstonia eutropha).